The following is a 188-amino-acid chain: MLSKIRPKVKQPLERIGKTLASLGITPNQLTIIGFLITLLASYEFYLQNQILAGIILAVGAFLDALDGALARATGKVSKFGGFLDSTIDRLSDASILFGIALGGLVRWDVTFLTLIGSYMVSYSRCRAELAGSGTLAIGIAERGERIIIIFIASLFNAVKIGVYLVAILSWITFIQRVYEAKKRLEMG.

2 helical membrane-spanning segments follow: residues 20–40 (LASLGITPNQLTIIGFLITLL) and 51–71 (ILAGIILAVGAFLDALDGALA). Residues D64, D67, D85, and D89 each contribute to the Mg(2+) site. D89 functions as the Proton acceptor in the catalytic mechanism. 2 helical membrane passes run 96–116 (ILFGIALGGLVRWDVTFLTLI) and 147–167 (IIIIFIASLFNAVKIGVYLVA).

Belongs to the CDP-alcohol phosphatidyltransferase class-I family. Requires Mn(2+) as cofactor. It depends on Mg(2+) as a cofactor.

The protein resides in the cell membrane. The catalysed reaction is CDP-2,3-bis-O-(phytanyl)-sn-glycerol + 1D-myo-inositol 3-phosphate = saturated 1-archaetidyl-1D-myo-inositol 3-phosphate + CMP + H(+). It participates in lipid metabolism; phospholipid metabolism. In terms of biological role, catalyzes the formation of archaetidylinositol phosphate (AIP) from CDP-archaeol (CDP-ArOH or CDP-2,3-bis-(O-phytanyl)-sn-glycerol) and 1L-myo-inositol 1-phosphate (IP or 1D-myo-inositol 3-phosphate). AIP is a precursor of archaetidyl-myo-inositol (AI), an ether-type inositol phospholipid ubiquitously distributed in archaea membranes and essential for glycolipid biosynthesis in archaea. This is Archaetidylinositol phosphate synthase from Pyrococcus horikoshii (strain ATCC 700860 / DSM 12428 / JCM 9974 / NBRC 100139 / OT-3).